The following is a 1808-amino-acid chain: Tenascin (1808 aa).

The first 22 residues, 1–22 (MGLPSQVLACAILGLLYQHASG), serve as a signal peptide directing secretion. Positions 23–33 (GLIKRIIRQKR) are excised as a propeptide. N38 is a glycosylation site (N-linked (GlcNAc...) asparagine). S72 carries an O-linked (Xyl...) (chondroitin sulfate) serine glycan. Residues 118–142 (DIKDLLSRLEELEGLVSSLREQCAS) adopt a coiled-coil conformation. N168 and N186 each carry an N-linked (GlcNAc...) asparagine glycan. Residues 176 to 188 (CVCEPGWKGPNCS) enclose the EGF-like 1; incomplete domain. EGF-like domains follow at residues 188 to 219 (SEPA…EDCS), 219 to 250 (SQAA…PDCG), 250 to 281 (GEEL…EDCN), 281 to 312 (NEPL…EDCG), 312 to 343 (GELI…EDCG), 343 to 374 (GELT…DDCS), 374 to 405 (SQKR…EDCG), 405 to 436 (GELR…EDCG), 436 to 467 (GELR…EDCG), 467 to 498 (GELR…EDCG), 498 to 529 (GELR…EDCG), 529 to 560 (GELS…EDCR), and 560 to 591 (RERS…IDCS). Disulfide bonds link C192/C202, C196/C207, C209/C218, C223/C233, C227/C238, C240/C249, C254/C264, C258/C269, C271/C280, C285/C295, C289/C300, C302/C311, C316/C326, C320/C331, C333/C342, C347/C357, C351/C362, C364/C373, C378/C388, C382/C393, C395/C404, C409/C419, C413/C424, C426/C435, C440/C450, C444/C455, C457/C466, C471/C481, C475/C486, C488/C497, C502/C512, C506/C517, C519/C528, C533/C543, C537/C548, C550/C559, C564/C574, C568/C579, and C581/C590. Residue N328 is glycosylated (N-linked (GlcNAc...) asparagine). 11 Fibronectin type-III domains span residues 595-685 (PPTE…LPAP), 686-775 (EGLK…TKLD), 776-866 (APSQ…DLDA), 867-957 (PRNL…TDLD), 958-1046 (NPKD…EEEP), 1047-1138 (ELGN…AHPE), 1139-1228 (VGEL…EAEP), 1229-1318 (EVDN…TVVG), 1319-1408 (SPKG…ALDS), 1409-1495 (PSGL…TGLD), and 1496-1584 (APKD…TGLL). N-linked (GlcNAc...) asparagine glycans are attached at residues N603, N643, N751, and N759. 6 N-linked (GlcNAc...) asparagine glycosylation sites follow: N1050, N1090, N1101, N1112, N1153, and N1183. N1416 carries N-linked (GlcNAc...) asparagine glycosylation. One can recognise a Fibrinogen C-terminal domain in the interval 1582–1797 (GLLYPYPKDC…FAEMKLRPSS (216 aa)). 2 N-linked (GlcNAc...) asparagine glycosylation sites follow: N1736 and N1769.

This sequence belongs to the tenascin family. In terms of assembly, homohexamer; disulfide-linked. A homotrimer may be formed in the triple coiled-coil region and may be stabilized by disulfide rings at both ends. Two of such half-hexabrachions may be disulfide linked within the central globule. Interacts with CSPG5. As to expression, expressed in the brain.

It is found in the secreted. Its subcellular location is the extracellular space. It localises to the extracellular matrix. In terms of biological role, extracellular matrix protein implicated in guidance of migrating neurons as well as axons during development, synaptic plasticity as well as neuronal regeneration. Ligand for integrins alpha-8/beta-1, alpha-9/beta-1, alpha-V/beta-3 and alpha-V/beta-6. In Gallus gallus (Chicken), this protein is Tenascin (TNC).